The primary structure comprises 163 residues: Large ribosomal subunit protein uL10 (163 aa).

It belongs to the universal ribosomal protein uL10 family. Part of the ribosomal stalk of the 50S ribosomal subunit. The N-terminus interacts with L11 and the large rRNA to form the base of the stalk. The C-terminus forms an elongated spine to which L12 dimers bind in a sequential fashion forming a multimeric L10(L12)X complex.

Its function is as follows. Forms part of the ribosomal stalk, playing a central role in the interaction of the ribosome with GTP-bound translation factors. In Haemophilus ducreyi (strain 35000HP / ATCC 700724), this protein is Large ribosomal subunit protein uL10.